The sequence spans 581 residues: Interleukin-22 receptor subunit alpha-1 (581 aa).

The first 15 residues, Met1–Ala15, serve as a signal peptide directing secretion. The Extracellular segment spans residues His16–Thr228. Fibronectin type-III domains follow at residues Thr18–Ser115 and Pro141–Thr221. An intrachain disulfide couples Cys71 to Cys79. A glycan (N-linked (GlcNAc...) asparagine) is linked at Asn80. A disulfide bridge connects residues Cys128 and Cys217. The chain crosses the membrane as a helical span at residues Tyr229–Leu249. The Cytoplasmic portion of the chain corresponds to Ser250 to Ser581. 2 disordered regions span residues Gln354–Lys493 and Pro539–Pro563. Positions Thr378–Ser389 are enriched in polar residues. Ser410 and Ser414 each carry phosphoserine. The segment covering Cys440–Glu449 has biased composition (polar residues).

Belongs to the type II cytokine receptor family. In terms of assembly, heterodimer with IL10RB and with IL20RB. Interacts with FBXW12; the interaction promotes ubiquitination of IL22RA1. Post-translationally, ubiquitinated.

It localises to the cell membrane. Functionally, component of the receptor for IL20, IL22 and IL24. Component of IL22 receptor formed by IL22RA1 and IL10RB enabling IL22 signaling via JAK/STAT pathways. IL22 also induces activation of MAPK1/MAPK3 and Akt kinases pathways. Component of one of the receptor for IL20 and IL24 formed by IL22RA1 and IL20RB also signaling through STATs activation. Mediates IL24 antiangiogenic activity as well as IL24 inhibitory effect on endothelial cell tube formation and differentiation. This chain is Interleukin-22 receptor subunit alpha-1 (IL22RA1), found in Bos taurus (Bovine).